The primary structure comprises 67 residues: Systemic RNA interference defective protein 5 (67 aa).

Residues methionine 1–aspartate 18 are Extracellular-facing. A helical membrane pass occupies residues isoleucine 19–asparagine 39. Residues arginine 40–aspartate 67 are Cytoplasmic-facing.

As to expression, ubiquitously present in most tissues tested. Expressed in the somatic cells of intestine, muscle, neurons, somatic gonad and embryos but not in the germline (at protein level).

Its subcellular location is the late endosome membrane. Its function is as follows. Plays a role in RNA-mediated gene silencing by mediating transport of both ingested and endogenous dsRNA between cells. Not required for the uptake of dsRNA from the intestinal lumen. The polypeptide is Systemic RNA interference defective protein 5 (Caenorhabditis elegans).